Here is a 417-residue protein sequence, read N- to C-terminus: UDP-N-acetylglucosamine 1-carboxyvinyltransferase (417 aa).

22-23 provides a ligand contact to phosphoenolpyruvate; the sequence is KN. Residue Arg92 coordinates UDP-N-acetyl-alpha-D-glucosamine. The Proton donor role is filled by Cys116. Cys116 is modified (2-(S-cysteinyl)pyruvic acid O-phosphothioketal). UDP-N-acetyl-alpha-D-glucosamine-binding residues include Asp304 and Ile326.

It belongs to the EPSP synthase family. MurA subfamily.

The protein resides in the cytoplasm. The enzyme catalyses phosphoenolpyruvate + UDP-N-acetyl-alpha-D-glucosamine = UDP-N-acetyl-3-O-(1-carboxyvinyl)-alpha-D-glucosamine + phosphate. It participates in cell wall biogenesis; peptidoglycan biosynthesis. Functionally, cell wall formation. Adds enolpyruvyl to UDP-N-acetylglucosamine. This Geobacter metallireducens (strain ATCC 53774 / DSM 7210 / GS-15) protein is UDP-N-acetylglucosamine 1-carboxyvinyltransferase.